A 438-amino-acid polypeptide reads, in one-letter code: 3-phosphoshikimate 1-carboxyvinyltransferase (438 aa).

The 3-phosphoshikimate site is built by Lys28, Ser29, and Arg33. Lys28 contributes to the phosphoenolpyruvate binding site. 2 residues coordinate phosphoenolpyruvate: Gly97 and Arg125. 3-phosphoshikimate-binding residues include Ser168, Ser169, Gln170, Glu316, and His343. Gln170 is a phosphoenolpyruvate binding site. The active-site Proton acceptor is Glu316. Positions 347, 388, and 413 each coordinate phosphoenolpyruvate.

The protein belongs to the EPSP synthase family. As to quaternary structure, monomer.

It is found in the cytoplasm. It carries out the reaction 3-phosphoshikimate + phosphoenolpyruvate = 5-O-(1-carboxyvinyl)-3-phosphoshikimate + phosphate. Its pathway is metabolic intermediate biosynthesis; chorismate biosynthesis; chorismate from D-erythrose 4-phosphate and phosphoenolpyruvate: step 6/7. Functionally, catalyzes the transfer of the enolpyruvyl moiety of phosphoenolpyruvate (PEP) to the 5-hydroxyl of shikimate-3-phosphate (S3P) to produce enolpyruvyl shikimate-3-phosphate and inorganic phosphate. The polypeptide is 3-phosphoshikimate 1-carboxyvinyltransferase (Rhodococcus jostii (strain RHA1)).